A 241-amino-acid polypeptide reads, in one-letter code: Ubiquinone biosynthesis O-methyltransferase (241 aa).

Residues Arg-46, Gly-66, Asp-87, and Met-131 each contribute to the S-adenosyl-L-methionine site.

This sequence belongs to the methyltransferase superfamily. UbiG/COQ3 family.

It carries out the reaction a 3-demethylubiquinol + S-adenosyl-L-methionine = a ubiquinol + S-adenosyl-L-homocysteine + H(+). The catalysed reaction is a 3-(all-trans-polyprenyl)benzene-1,2-diol + S-adenosyl-L-methionine = a 2-methoxy-6-(all-trans-polyprenyl)phenol + S-adenosyl-L-homocysteine + H(+). The protein operates within cofactor biosynthesis; ubiquinone biosynthesis. Functionally, O-methyltransferase that catalyzes the 2 O-methylation steps in the ubiquinone biosynthetic pathway. The sequence is that of Ubiquinone biosynthesis O-methyltransferase from Bordetella parapertussis (strain 12822 / ATCC BAA-587 / NCTC 13253).